Consider the following 273-residue polypeptide: UPF0173 metal-dependent hydrolase Bpro_4324 (273 aa).

It belongs to the UPF0173 family.

The polypeptide is UPF0173 metal-dependent hydrolase Bpro_4324 (Polaromonas sp. (strain JS666 / ATCC BAA-500)).